Reading from the N-terminus, the 507-residue chain is Histidine ammonia-lyase (507 aa).

Residues 141–143 (ASG) constitute a cross-link (5-imidazolinone (Ala-Gly)). 2,3-didehydroalanine (Ser) is present on Ser-142.

It belongs to the PAL/histidase family. In terms of processing, contains an active site 4-methylidene-imidazol-5-one (MIO), which is formed autocatalytically by cyclization and dehydration of residues Ala-Ser-Gly.

Its subcellular location is the cytoplasm. It catalyses the reaction L-histidine = trans-urocanate + NH4(+). Its pathway is amino-acid degradation; L-histidine degradation into L-glutamate; N-formimidoyl-L-glutamate from L-histidine: step 1/3. This Burkholderia lata (strain ATCC 17760 / DSM 23089 / LMG 22485 / NCIMB 9086 / R18194 / 383) protein is Histidine ammonia-lyase.